Reading from the N-terminus, the 98-residue chain is MFRIILERIEHSLKFSTLQEVDFGVGFKTKITERKFNRNSIGANDILFFQLSERPGQTLFFSSAVFKQSIINELNRLNNYLNRPYSIDNEPFPFSLTF.

This is an uncharacterized protein from Dictyostelium discoideum (Social amoeba).